The following is a 274-amino-acid chain: Large ribosomal subunit protein uL2 (274 aa).

The interval 1–23 (MAIKIYRPTSPGRRHHSVSSFEE) is disordered.

The protein belongs to the universal ribosomal protein uL2 family. As to quaternary structure, part of the 50S ribosomal subunit. Forms a bridge to the 30S subunit in the 70S ribosome.

In terms of biological role, one of the primary rRNA binding proteins. Required for association of the 30S and 50S subunits to form the 70S ribosome, for tRNA binding and peptide bond formation. It has been suggested to have peptidyltransferase activity; this is somewhat controversial. Makes several contacts with the 16S rRNA in the 70S ribosome. This Dehalococcoides mccartyi (strain ATCC BAA-2100 / JCM 16839 / KCTC 5957 / BAV1) protein is Large ribosomal subunit protein uL2.